Consider the following 93-residue polypeptide: Pyrimidine/purine nucleoside phosphorylase (93 aa).

The protein belongs to the nucleoside phosphorylase PpnP family.

It carries out the reaction a purine D-ribonucleoside + phosphate = a purine nucleobase + alpha-D-ribose 1-phosphate. It catalyses the reaction adenosine + phosphate = alpha-D-ribose 1-phosphate + adenine. The enzyme catalyses cytidine + phosphate = cytosine + alpha-D-ribose 1-phosphate. The catalysed reaction is guanosine + phosphate = alpha-D-ribose 1-phosphate + guanine. It carries out the reaction inosine + phosphate = alpha-D-ribose 1-phosphate + hypoxanthine. It catalyses the reaction thymidine + phosphate = 2-deoxy-alpha-D-ribose 1-phosphate + thymine. The enzyme catalyses uridine + phosphate = alpha-D-ribose 1-phosphate + uracil. The catalysed reaction is xanthosine + phosphate = alpha-D-ribose 1-phosphate + xanthine. Catalyzes the phosphorolysis of diverse nucleosides, yielding D-ribose 1-phosphate and the respective free bases. Can use uridine, adenosine, guanosine, cytidine, thymidine, inosine and xanthosine as substrates. Also catalyzes the reverse reactions. This Pseudomonas syringae pv. syringae (strain B728a) protein is Pyrimidine/purine nucleoside phosphorylase.